Consider the following 570-residue polypeptide: Urease subunit alpha (570 aa).

The Urease domain occupies G131–F570. Ni(2+) is bound by residues H136, H138, and K219. K219 bears the N6-carboxylysine mark. H221 provides a ligand contact to substrate. H248 and H274 together coordinate Ni(2+). Residue H322 is the Proton donor of the active site. Position 362 (D362) interacts with Ni(2+).

Belongs to the metallo-dependent hydrolases superfamily. Urease alpha subunit family. As to quaternary structure, heterotrimer of UreA (gamma), UreB (beta) and UreC (alpha) subunits. Three heterotrimers associate to form the active enzyme. Ni cation serves as cofactor. Carboxylation allows a single lysine to coordinate two nickel ions.

Its subcellular location is the cytoplasm. It catalyses the reaction urea + 2 H2O + H(+) = hydrogencarbonate + 2 NH4(+). It participates in nitrogen metabolism; urea degradation; CO(2) and NH(3) from urea (urease route): step 1/1. This chain is Urease subunit alpha, found in Methylocella silvestris (strain DSM 15510 / CIP 108128 / LMG 27833 / NCIMB 13906 / BL2).